Reading from the N-terminus, the 144-residue chain is Transcriptional regulator SlyA (144 aa).

An HTH marR-type domain is found at 2–135 (ESPLGSDLAR…LIKLIAKLEH (134 aa)). Residues 49-72 (QIQLAKAIGIEQPSLVRTLDQLEE) constitute a DNA-binding region (H-T-H motif).

This sequence belongs to the SlyA family. As to quaternary structure, homodimer.

Transcription regulator that can specifically activate or repress expression of target genes. In Escherichia coli O127:H6 (strain E2348/69 / EPEC), this protein is Transcriptional regulator SlyA.